The following is a 326-amino-acid chain: Transcription factor bHLH143 (326 aa).

The span at 175–189 shows a compositional bias: acidic residues; that stretch reads SDDDDNDDWESDDEV. 2 disordered regions span residues 175 to 194 and 234 to 275; these read SDDD…STGH and RDSS…EQSR. The segment covering 255–271 has biased composition (polar residues); that stretch reads PESNISSKQETGSGLSD. Positions 263–312 constitute a bHLH domain; the sequence is QETGSGLSDEQSRKDKIHTALRILESVVPGAKGKEALLLLDEAIDYLKLL.

As to quaternary structure, homodimer.

It localises to the nucleus. The protein is Transcription factor bHLH143 (BHLH143) of Arabidopsis thaliana (Mouse-ear cress).